A 269-amino-acid polypeptide reads, in one-letter code: Auxin-responsive protein IAA26 (269 aa).

Over residues 25 to 40 the composition is skewed to basic and acidic residues; it reads YQEDKNNTDQEKKLEL. 2 disordered regions span residues 25–55 and 76–146; these read YQEDKNNTDQEKKLELRLGPPGGDEEDHSAI and CFNG…KQVE. An EAR-like (transcriptional repression) motif is present at residues 38 to 42; it reads LELRL. Polar residues-rich tracts occupy residues 80–93 and 117–136; these read NHFSPSNKTTSVPH and LASTSSSKLGNESSHGGQIN. A compositionally biased stretch (basic and acidic residues) spans 137-146; that stretch reads KSDDGEKQVE. In terms of domain architecture, PB1 spans 151-250; the sequence is GMFVKINMDG…SVKRLRVIKS (100 aa).

The protein belongs to the Aux/IAA family. Homodimers and heterodimers. Interacts with phytochrome A. Interacts with TPL.

The protein resides in the nucleus. Its function is as follows. Aux/IAA proteins are short-lived transcriptional factors that function as repressors of early auxin response genes at low auxin concentrations. Repression is thought to result from the interaction with auxin response factors (ARFs), proteins that bind to the auxin-responsive promoter element (AuxRE). Formation of heterodimers with ARF proteins may alter their ability to modulate early auxin response genes expression. In Arabidopsis thaliana (Mouse-ear cress), this protein is Auxin-responsive protein IAA26 (IAA26).